The primary structure comprises 251 residues: Triosephosphate isomerase (251 aa).

Substrate is bound at residue 10–12 (NWK). Catalysis depends on His98, which acts as the Electrophile. Residue Glu169 is the Proton acceptor of the active site. Residues Gly175, Ser213, and 234–235 (GG) contribute to the substrate site.

Belongs to the triosephosphate isomerase family. Homodimer.

The protein localises to the cytoplasm. The catalysed reaction is D-glyceraldehyde 3-phosphate = dihydroxyacetone phosphate. The protein operates within carbohydrate biosynthesis; gluconeogenesis. Its pathway is carbohydrate degradation; glycolysis; D-glyceraldehyde 3-phosphate from glycerone phosphate: step 1/1. In terms of biological role, involved in the gluconeogenesis. Catalyzes stereospecifically the conversion of dihydroxyacetone phosphate (DHAP) to D-glyceraldehyde-3-phosphate (G3P). This Paracidovorax citrulli (strain AAC00-1) (Acidovorax citrulli) protein is Triosephosphate isomerase.